A 384-amino-acid chain; its full sequence is 1-deoxy-D-xylulose 5-phosphate reductoisomerase (384 aa).

NADPH-binding residues include Thr-10, Gly-11, Ser-12, Ile-13, Gly-36, and Asn-122. Lys-123 is a binding site for 1-deoxy-D-xylulose 5-phosphate. Glu-124 is a binding site for NADPH. Mn(2+) is bound at residue Asp-148. Residues Ser-149, Glu-150, Ser-174, and His-197 each coordinate 1-deoxy-D-xylulose 5-phosphate. Position 150 (Glu-150) interacts with Mn(2+). Gly-203 is an NADPH binding site. Ser-210, Asn-215, Lys-216, and Glu-219 together coordinate 1-deoxy-D-xylulose 5-phosphate. Residue Glu-219 participates in Mn(2+) binding.

This sequence belongs to the DXR family. Mg(2+) is required as a cofactor. Requires Mn(2+) as cofactor.

It catalyses the reaction 2-C-methyl-D-erythritol 4-phosphate + NADP(+) = 1-deoxy-D-xylulose 5-phosphate + NADPH + H(+). The protein operates within isoprenoid biosynthesis; isopentenyl diphosphate biosynthesis via DXP pathway; isopentenyl diphosphate from 1-deoxy-D-xylulose 5-phosphate: step 1/6. In terms of biological role, catalyzes the NADPH-dependent rearrangement and reduction of 1-deoxy-D-xylulose-5-phosphate (DXP) to 2-C-methyl-D-erythritol 4-phosphate (MEP). The polypeptide is 1-deoxy-D-xylulose 5-phosphate reductoisomerase (Chlorobium phaeobacteroides (strain DSM 266 / SMG 266 / 2430)).